The following is a 195-amino-acid chain: Large ribosomal subunit protein eL6 (195 aa).

A phosphoserine mark is found at Ser105 and Ser115.

The protein belongs to the eukaryotic ribosomal protein eL6 family. In terms of assembly, component of the large ribosomal subunit (LSU). Mature yeast ribosomes consist of a small (40S) and a large (60S) subunit. The 40S small subunit contains 1 molecule of ribosomal RNA (18S rRNA) and at least 33 different proteins. The large 60S subunit contains 3 rRNA molecules (25S, 5.8S and 5S rRNA) and at least 46 different proteins.

The protein resides in the cytoplasm. Its subcellular location is the nucleus. It localises to the nucleolus. In terms of biological role, component of the ribosome, a large ribonucleoprotein complex responsible for the synthesis of proteins in the cell. The small ribosomal subunit (SSU) binds messenger RNAs (mRNAs) and translates the encoded message by selecting cognate aminoacyl-transfer RNA (tRNA) molecules. The large subunit (LSU) contains the ribosomal catalytic site termed the peptidyl transferase center (PTC), which catalyzes the formation of peptide bonds, thereby polymerizing the amino acids delivered by tRNAs into a polypeptide chain. The nascent polypeptides leave the ribosome through a tunnel in the LSU and interact with protein factors that function in enzymatic processing, targeting, and the membrane insertion of nascent chains at the exit of the ribosomal tunnel. This chain is Large ribosomal subunit protein eL6 (rpl6), found in Schizosaccharomyces pombe (strain 972 / ATCC 24843) (Fission yeast).